We begin with the raw amino-acid sequence, 324 residues long: DNA repair and recombination protein RadA (324 aa).

107–114 (GEFGSGKS) contributes to the ATP binding site.

Belongs to the eukaryotic RecA-like protein family.

In terms of biological role, involved in DNA repair and in homologous recombination. Binds and assemble on single-stranded DNA to form a nucleoprotein filament. Hydrolyzes ATP in a ssDNA-dependent manner and promotes DNA strand exchange between homologous DNA molecules. The chain is DNA repair and recombination protein RadA from Methanoculleus marisnigri (strain ATCC 35101 / DSM 1498 / JR1).